The chain runs to 464 residues: Arginine biosynthesis bifunctional protein ArgJ, chloroplastic (464 aa).

Substrate-binding residues include Thr208, Lys234, Thr245, Glu332, Asn459, and Thr464. Thr245 (nucleophile) is an active-site residue.

It belongs to the ArgJ family. As to quaternary structure, heterodimer of an alpha and a beta chain.

The protein localises to the plastid. It is found in the chloroplast. It catalyses the reaction N(2)-acetyl-L-ornithine + L-glutamate = N-acetyl-L-glutamate + L-ornithine. It carries out the reaction L-glutamate + acetyl-CoA = N-acetyl-L-glutamate + CoA + H(+). It participates in amino-acid biosynthesis; L-arginine biosynthesis; L-ornithine and N-acetyl-L-glutamate from L-glutamate and N(2)-acetyl-L-ornithine (cyclic): step 1/1. It functions in the pathway amino-acid biosynthesis; L-arginine biosynthesis; N(2)-acetyl-L-ornithine from L-glutamate: step 1/4. Functionally, catalyzes two activities which are involved in the cyclic version of arginine biosynthesis: the synthesis of acetylglutamate from glutamate and acetyl-CoA, and of ornithine by transacetylation between acetylornithine and glutamate. The sequence is that of Arginine biosynthesis bifunctional protein ArgJ, chloroplastic from Zea mays (Maize).